We begin with the raw amino-acid sequence, 815 residues long: uncharacterized protein (815 aa).

Positions 1 to 21 (MNIYRLSFVSCLVMAMPCAMA) are cleaved as a signal peptide. A disulfide bridge links Cys-795 with Cys-814.

Belongs to the fimbrial export usher family.

The protein localises to the cell outer membrane. In terms of biological role, could be involved in the export and assembly of the putative YbgD fimbrial subunit across the outer membrane. This is an uncharacterized protein from Escherichia coli (strain K12).